We begin with the raw amino-acid sequence, 1175 residues long: uncharacterized protein (1175 aa).

586-593 (GPAGTGKT) provides a ligand contact to ATP.

This is an uncharacterized protein from Methanocaldococcus jannaschii (strain ATCC 43067 / DSM 2661 / JAL-1 / JCM 10045 / NBRC 100440) (Methanococcus jannaschii).